The sequence spans 262 residues: MSPMARKPLIAGNWKMNLDHQQAIGTVQKLAFALHKDYYEKVDVAVIVPFTDLRSVQTLVEGDKLQITYGAQDVSQHESGAYTGEVSASMLAKLNCSWVVVGHSERREYHNETDELVAAKAKAALSKGISPIVCVGEPLEIREAGTHVDYVVEQTRASLAGLSADELANTVIAYEPVWAIGTGKVASAADAQEVCKAIRGLVTELAGEEVAEGMRILYGGSVKAETIAEIVSQPDVDGGLVGGASLDGEAFAKLAANAANAV.

13 to 15 is a substrate binding site; the sequence is NWK. Histidine 103 (electrophile) is an active-site residue. Glutamate 175 (proton acceptor) is an active-site residue. Substrate is bound by residues glycine 181, serine 221, and 242-243; that span reads GG.

The protein belongs to the triosephosphate isomerase family. Homodimer.

The protein localises to the cytoplasm. It carries out the reaction D-glyceraldehyde 3-phosphate = dihydroxyacetone phosphate. It participates in carbohydrate biosynthesis; gluconeogenesis. Its pathway is carbohydrate degradation; glycolysis; D-glyceraldehyde 3-phosphate from glycerone phosphate: step 1/1. Involved in the gluconeogenesis. Catalyzes stereospecifically the conversion of dihydroxyacetone phosphate (DHAP) to D-glyceraldehyde-3-phosphate (G3P). This is Triosephosphate isomerase from Corynebacterium efficiens (strain DSM 44549 / YS-314 / AJ 12310 / JCM 11189 / NBRC 100395).